The primary structure comprises 162 residues: Endoribonuclease YbeY (162 aa).

The Zn(2+) site is built by H118, H122, and H128.

It belongs to the endoribonuclease YbeY family. It depends on Zn(2+) as a cofactor.

It localises to the cytoplasm. Functionally, single strand-specific metallo-endoribonuclease involved in late-stage 70S ribosome quality control and in maturation of the 3' terminus of the 16S rRNA. The polypeptide is Endoribonuclease YbeY (Glaesserella parasuis serovar 5 (strain SH0165) (Haemophilus parasuis)).